Reading from the N-terminus, the 390-residue chain is MLSVRAPLATIADQQQLHLSPLKRLSLADKENTPPTLSSARVLASKAARRIFQDSAELESKAPTKPSIEEEPLLRENPRRFVVFPIEYHDIWQMYKKAEASFWTAEEVDLSKDIQHWEALKPDERHFISHVLAFFAASDGIVNENLVERFSQEVQVTEARCFYGFQIAMENIHSEMYSLLIDTYIKDSKEREYLFNAIETMPCVKKKADWALRWIGDKEATYGERVVAFAAVEGIFFSGSFASIFWLKKRGLMPGLTFSNELISRDEGLHCDFACLMFKHLVHKPSEQRVKEIITNSVRIEQEFLTEALPVKLIGMNCTLMKQYIEFVADRLMLELGFNKIFKVENPFDFMENISLEGKTNFFEKRVGEYQRMGVMSNSTENSFTLDADF.

Residue Ser-20 is modified to Phosphoserine. Phosphothreonine is present on Thr-33. Positions 49 to 51 (RRI) match the Cy motif. Residues Asp-139, Glu-170, and His-173 each coordinate Fe cation. The active site involves Tyr-177. 3 residues coordinate Fe cation: Glu-233, Glu-267, and His-270.

Belongs to the ribonucleoside diphosphate reductase small chain family. Heterodimer of a large and a small subunit. Interacts (via Cy motif and when phosphorylated at Thr-33) with CCNF; the interaction occurs exclusively in G2 and early M. It depends on Fe cation as a cofactor. In terms of processing, phosphorylation on Ser-20 relieves the inhibitory effect on Wnt signaling. Phosphorylated on Thr-33 by CDK1 and CDK2; predominantly in G2 and M phase. Ubiquitinated by the SCF(CCNF) E3 ubiquitin-protein ligase complex; leading to its degradation by the proteasome.

It localises to the cytoplasm. The protein resides in the nucleus. The catalysed reaction is a 2'-deoxyribonucleoside 5'-diphosphate + [thioredoxin]-disulfide + H2O = a ribonucleoside 5'-diphosphate + [thioredoxin]-dithiol. Functionally, provides the precursors necessary for DNA synthesis. Catalyzes the biosynthesis of deoxyribonucleotides from the corresponding ribonucleotides. Inhibits Wnt signaling. The protein is Ribonucleoside-diphosphate reductase subunit M2 (Rrm2) of Rattus norvegicus (Rat).